Reading from the N-terminus, the 346-residue chain is DNA ligase (346 aa).

ATP contacts are provided by residues 32–35 (DCKY), arginine 39, 55–57 (RVS), glutamate 93, glutamate 142, and arginine 149. Catalysis depends on lysine 34, which acts as the N6-AMP-lysine intermediate. Glutamate 223 is a binding site for a divalent metal cation. ATP-binding residues include lysine 238 and lysine 244.

The protein belongs to the ATP-dependent DNA ligase family. It depends on a divalent metal cation as a cofactor.

It carries out the reaction ATP + (deoxyribonucleotide)n-3'-hydroxyl + 5'-phospho-(deoxyribonucleotide)m = (deoxyribonucleotide)n+m + AMP + diphosphate.. DNA ligase, which is expressed in the early stage of lytic development, has been implicated in T7 DNA synthesis and genetic recombination. It may also play a role in T7 DNA repair. This Enterobacteria phage T3 (Bacteriophage T3) protein is DNA ligase (1.3).